Consider the following 252-residue polypeptide: 2-succinyl-6-hydroxy-2,4-cyclohexadiene-1-carboxylate synthase (252 aa).

It belongs to the AB hydrolase superfamily. MenH family. In terms of assembly, monomer.

It catalyses the reaction 5-enolpyruvoyl-6-hydroxy-2-succinyl-cyclohex-3-ene-1-carboxylate = (1R,6R)-6-hydroxy-2-succinyl-cyclohexa-2,4-diene-1-carboxylate + pyruvate. Its pathway is quinol/quinone metabolism; 1,4-dihydroxy-2-naphthoate biosynthesis; 1,4-dihydroxy-2-naphthoate from chorismate: step 3/7. The protein operates within quinol/quinone metabolism; menaquinone biosynthesis. Its function is as follows. Catalyzes a proton abstraction reaction that results in 2,5-elimination of pyruvate from 2-succinyl-5-enolpyruvyl-6-hydroxy-3-cyclohexene-1-carboxylate (SEPHCHC) and the formation of 2-succinyl-6-hydroxy-2,4-cyclohexadiene-1-carboxylate (SHCHC). This chain is 2-succinyl-6-hydroxy-2,4-cyclohexadiene-1-carboxylate synthase, found in Citrobacter koseri (strain ATCC BAA-895 / CDC 4225-83 / SGSC4696).